We begin with the raw amino-acid sequence, 366 residues long: Protein-methionine-sulfoxide reductase catalytic subunit MsrP (366 aa).

Positions Met1–Asn22 are enriched in low complexity. Residues Met1–Leu40 form a disordered region. A signal peptide (tat-type signal) is located at residues Met1–Ala76. Polar residues predominate over residues Ser23–Ser33. Residues Asn120, Tyr123–Glu124, Cys178, Thr213, Asn265, Arg270, and Ser281–Lys283 contribute to the Mo-molybdopterin site.

This sequence belongs to the MsrP family. Heterodimer of a catalytic subunit (MsrP) and a heme-binding subunit (MsrQ). The cofactor is Mo-molybdopterin. Post-translationally, predicted to be exported by the Tat system. The position of the signal peptide cleavage has not been experimentally proven.

It localises to the periplasm. It carries out the reaction L-methionyl-[protein] + a quinone + H2O = L-methionyl-(S)-S-oxide-[protein] + a quinol. The catalysed reaction is L-methionyl-[protein] + a quinone + H2O = L-methionyl-(R)-S-oxide-[protein] + a quinol. In terms of biological role, part of the MsrPQ system that repairs oxidized periplasmic proteins containing methionine sulfoxide residues (Met-O), using respiratory chain electrons. Thus protects these proteins from oxidative-stress damage caused by reactive species of oxygen and chlorine generated by the host defense mechanisms. MsrPQ is essential for the maintenance of envelope integrity under bleach stress, rescuing a wide series of structurally unrelated periplasmic proteins from methionine oxidation. The catalytic subunit MsrP is non-stereospecific, being able to reduce both (R-) and (S-) diastereoisomers of methionine sulfoxide. This is Protein-methionine-sulfoxide reductase catalytic subunit MsrP from Yersinia pestis.